Reading from the N-terminus, the 769-residue chain is Bifunctional glycosyltransferase pgtA (769 aa).

The segment at 25–210 (YQGINNLIIS…SVIFKRSIFT (186 aa)) is N-acetylgalactosamine 3-beta-galactosyltransferase. Residues 410–441 (NNINNNNNNNNNNNNNNNNNNNNNNNNNNNNN) are compositionally biased toward low complexity. The disordered stretch occupies residues 410-442 (NNINNNNNNNNNNNNNNNNNNNNNNNNNNNNNS). The tract at residues 442–769 (SILNFISGIN…SVHIGELFIS (328 aa)) is alpha-1,2-fucosyltransferase.

This sequence belongs to the glycosyltransferase 2 family.

It catalyses the reaction an N-acetyl-beta-D-glucosaminyl derivative + UDP-alpha-D-galactose = a beta-D-galactosyl-(1-&gt;3)-N-acetyl-beta-D-glucosaminyl derivative + UDP + H(+). The catalysed reaction is a beta-D-galactosyl-(1-&gt;3)-N-acetyl-beta-D-glucosaminyl derivative + GDP-beta-L-fucose = an alpha-L-Fuc-(1-&gt;2)-beta-D-Gal-(1-&gt;3)-beta-D-GlcNAc derivative + GDP + H(+). Functionally, bifunctional protein composed of 2 glycosyltransferase domains involved in glycosylating skp1. The N-terminal part catalyzes the transfer of a galactose residue to GlcNAc-skp1 in a beta 1-3 linkage. The C-terminal part catalyzes the transfer of a fucose residue to Gal-GlcNAc-skp1 in an alpha 1-2 linkage. This chain is Bifunctional glycosyltransferase pgtA (pgtA), found in Dictyostelium discoideum (Social amoeba).